Consider the following 339-residue polypeptide: Dihydroorotase (339 aa).

Residues H12 and H14 each coordinate Zn(2+). Substrate-binding positions include 14-16 (HVR) and N40. Zn(2+) is bound by residues K94, H133, H167, and D239. N6-carboxylysine is present on K94. Substrate is bound at residue H133. D239 is a catalytic residue. Substrate is bound by residues H243 and A255.

It belongs to the metallo-dependent hydrolases superfamily. DHOase family. Class II DHOase subfamily. In terms of assembly, homodimer. Requires Zn(2+) as cofactor.

It carries out the reaction (S)-dihydroorotate + H2O = N-carbamoyl-L-aspartate + H(+). The protein operates within pyrimidine metabolism; UMP biosynthesis via de novo pathway; (S)-dihydroorotate from bicarbonate: step 3/3. Functionally, catalyzes the reversible cyclization of carbamoyl aspartate to dihydroorotate. This chain is Dihydroorotase, found in Helicobacter pylori (strain G27).